The sequence spans 144 residues: Ribonuclease H (144 aa).

In terms of domain architecture, RNase H type-1 spans 1–141; sequence MDKIDIYSDG…ADALANRGVE (141 aa). Mg(2+)-binding residues include D9, E47, D69, and D133.

The protein belongs to the RNase H family. As to quaternary structure, monomer. It depends on Mg(2+) as a cofactor.

The protein resides in the cytoplasm. It catalyses the reaction Endonucleolytic cleavage to 5'-phosphomonoester.. Functionally, endonuclease that specifically degrades the RNA of RNA-DNA hybrids. The sequence is that of Ribonuclease H from Janthinobacterium sp. (strain Marseille) (Minibacterium massiliensis).